Consider the following 1530-residue polypeptide: B-cell CLL/lymphoma 9-like protein (1530 aa).

8 disordered regions span residues 1-101 (MHSE…VLEP), 155-187 (QGHS…TDLH), 246-353 (HISS…PSVL), 398-439 (SGTG…IGGG), 473-503 (QTQN…LSSP), 821-1076 (QNGR…QNPL), 1250-1279 (KGMS…SEVI), and 1310-1331 (SETM…QVSS). Over residues 8–18 (SNHGKQVTSGA) the composition is skewed to polar residues. A compositionally biased stretch (low complexity) spans 19 to 34 (QSQLPNVNQAQQQAPA). Positions 81 to 93 (ERSVSIDTGDQRE) are enriched in basic and acidic residues. The span at 156-165 (GHSGSSTTGH) shows a compositional bias: low complexity. Gly residues predominate over residues 170-180 (GGPGLGSGHGP). 2 stretches are compositionally biased toward polar residues: residues 247–264 (ISSS…QSGT) and 278–287 (GTSTPSSTGH). 2 stretches are compositionally biased toward low complexity: residues 409 to 426 (GPNG…NSND) and 485 to 503 (SLMG…LSSP). Polar residues-rich tracts occupy residues 875-891 (LSST…TGSR), 920-930 (QLKSPSLSQEP), and 944-953 (SPSQLPQSGP). Low complexity-rich tracts occupy residues 960 to 971 (AASGAGTPSSTS), 979 to 994 (GPSL…PGHL), and 1031 to 1060 (SSST…INPS). A compositionally biased stretch (pro residues) spans 1258-1268 (PHQPDSFPPMP).

Belongs to the BCL9 family.

The protein resides in the nucleus. Its function is as follows. Transcriptional regulator that may act as an activator. Plays a role for mesoderm patterning in early embryogenesis. This chain is B-cell CLL/lymphoma 9-like protein (bcl9l), found in Danio rerio (Zebrafish).